Reading from the N-terminus, the 286-residue chain is UDP-3-O-acyl-N-acetylglucosamine deacetylase (286 aa).

Zn(2+) contacts are provided by histidine 79, histidine 237, and aspartate 241. Residue histidine 264 is the Proton donor of the active site.

Belongs to the LpxC family. It depends on Zn(2+) as a cofactor.

It carries out the reaction a UDP-3-O-[(3R)-3-hydroxyacyl]-N-acetyl-alpha-D-glucosamine + H2O = a UDP-3-O-[(3R)-3-hydroxyacyl]-alpha-D-glucosamine + acetate. Its pathway is glycolipid biosynthesis; lipid IV(A) biosynthesis; lipid IV(A) from (3R)-3-hydroxytetradecanoyl-[acyl-carrier-protein] and UDP-N-acetyl-alpha-D-glucosamine: step 2/6. Its function is as follows. Catalyzes the hydrolysis of UDP-3-O-myristoyl-N-acetylglucosamine to form UDP-3-O-myristoylglucosamine and acetate, the committed step in lipid A biosynthesis. The protein is UDP-3-O-acyl-N-acetylglucosamine deacetylase of Chlamydia trachomatis serovar A (strain ATCC VR-571B / DSM 19440 / HAR-13).